A 124-amino-acid polypeptide reads, in one-letter code: Small ribosomal subunit protein uS12 (124 aa).

Asp-89 carries the 3-methylthioaspartic acid modification.

Belongs to the universal ribosomal protein uS12 family. As to quaternary structure, part of the 30S ribosomal subunit. Contacts proteins S8 and S17. May interact with IF1 in the 30S initiation complex.

Functionally, with S4 and S5 plays an important role in translational accuracy. Its function is as follows. Interacts with and stabilizes bases of the 16S rRNA that are involved in tRNA selection in the A site and with the mRNA backbone. Located at the interface of the 30S and 50S subunits, it traverses the body of the 30S subunit contacting proteins on the other side and probably holding the rRNA structure together. The combined cluster of proteins S8, S12 and S17 appears to hold together the shoulder and platform of the 30S subunit. This is Small ribosomal subunit protein uS12 from Buchnera aphidicola subsp. Schizaphis graminum (strain Sg).